We begin with the raw amino-acid sequence, 663 residues long: Pyoverdine export ATP-binding/permease protein PvdT (663 aa).

The ABC transporter domain occupies 11–250 (IELRDIRKRY…PSAGVERHLQ (240 aa)). An ATP-binding site is contributed by 48-55 (GASGSGKS). 4 consecutive transmembrane segments (helical) span residues 292–312 (ALTLLGIIIGVASVVVMLAVG), 545–565 (IAAISLLVGGIGVMNIMLMTV), 598–618 (VVGGLAGIALALCIGGVLLLG), and 626–646 (LSAIVGAFSCALVTGLVFGFM).

Belongs to the ABC transporter superfamily. Macrolide exporter (TC 3.A.1.122) family. In terms of assembly, part of the tripartite efflux system PvdRT-OpmQ, which is composed of an inner membrane component with both ATPase and permease domains, PvdT, a periplasmic membrane fusion protein, PvdR, and an outer membrane component, OpmQ.

It localises to the cell inner membrane. In terms of biological role, part of the tripartite efflux system PvdRT-OpmQ required for the secretion into the extracellular milieu of the siderophore pyoverdine (PVD), which is involved in iron acquisition. This subunit binds PVD and drives its secretion by hydrolyzing ATP. The system is responsible for export of newly synthesized PVD after the final steps of biosynthesis have taken place in the periplasm. It is also responsible for recycling of PVD after internalization of ferri-PVD into the periplasm by the outer-membrane receptor FpvA and release of iron from PVD, thus making PVD available for new cycles of iron uptake. In addition, can expel unwanted metals complexed with PVD from the periplasm into the extracellular medium. In Pseudomonas aeruginosa (strain ATCC 15692 / DSM 22644 / CIP 104116 / JCM 14847 / LMG 12228 / 1C / PRS 101 / PAO1), this protein is Pyoverdine export ATP-binding/permease protein PvdT.